The sequence spans 325 residues: uncharacterized protein (325 aa).

The N-terminal 69 residues, 1–69, are a transit peptide targeting the chloroplast; that stretch reads MAMMTTTTTT…KNRRVSVTVS (69 aa). Ala-70 carries the N-acetylalanine modification.

Belongs to the NAD(P)-dependent epimerase/dehydratase family.

It localises to the plastid. It is found in the chloroplast. This is an uncharacterized protein from Arabidopsis thaliana (Mouse-ear cress).